The following is a 524-amino-acid chain: Probable lipid II flippase MurJ (524 aa).

13 helical membrane passes run 44 to 64 (IFGA…PNLL), 103 to 123 (LLTL…PWVI), 146 to 166 (ITFP…ILNT), 172 to 192 (IPAF…LFAA), 195 to 215 (FNPP…LQLV), 250 to 270 (ILGV…ASFL), 284 to 304 (LMEF…LPSL), 322 to 342 (WGLR…GILA), 367 to 387 (LIAY…APGF), 396 to 416 (PVKI…AFIG), 420 to 440 (HAGL…LLYW), 456 to 476 (WFLM…FGVL), and 494 to 514 (LMAV…VLGF).

The protein belongs to the MurJ/MviN family.

The protein localises to the cell inner membrane. It participates in cell wall biogenesis; peptidoglycan biosynthesis. In terms of biological role, involved in peptidoglycan biosynthesis. Transports lipid-linked peptidoglycan precursors from the inner to the outer leaflet of the cytoplasmic membrane. This Salmonella typhimurium (strain LT2 / SGSC1412 / ATCC 700720) protein is Probable lipid II flippase MurJ.